Here is a 208-residue protein sequence, read N- to C-terminus: Proheparin-binding EGF-like growth factor (208 aa).

The N-terminal stretch at 1-23 (MKLLPSVVLKLFLAAVFSALVTG) is a signal peptide. A propeptide spanning residues 24 to 62 (ESLERLRRGLADGTSNLVSPTESTDQLLPPGGGRGREVL) is cleaved from the precursor. The Extracellular portion of the chain corresponds to 24 to 161 (ESLERLRRGL…NRLYTYDHTT (138 aa)). The segment covering 37 to 49 (TSNLVSPTESTDQ) has biased composition (polar residues). 2 disordered regions span residues 37–57 (TSNLVSPTESTDQLLPPGGGR) and 81–104 (QALATPSKEERGKRKKKGKGLGKK). O-linked (GalNAc...) threonine glycosylation is present at Thr-85. Basic residues predominate over residues 93-102 (KRKKKGKGLG). Positions 104–144 (KRDPCLRKYKDFCIHGECKYVKELRAPSCICHPGYHGERCH) constitute an EGF-like domain. Cystine bridges form between Cys-108–Cys-121, Cys-116–Cys-132, and Cys-134–Cys-143. The propeptide at 149–208 (PVKNRLYTYDHTTILAVVAVVLSSVCLLVIVGLLMFRYHRRGGYDVENEEKVKLGVTASH) is C-terminal. Residues 162–182 (ILAVVAVVLSSVCLLVIVGLL) form a helical membrane-spanning segment. The Cytoplasmic segment spans residues 183-208 (MFRYHRRGGYDVENEEKVKLGVTASH).

In terms of assembly, interacts with FBLN1. Interacts with EGFR and ERBB4. In terms of processing, O-glycosylated. Macrophages, midbrain, cerebellum, hypothalamus, cerebral cortex, bulbourethral gland, lung, heart ventricle, kidney, skin, prostate, seminal vesicle, testis; at low levels in lymph node, thymus, spleen; not detected in pituitary, olfactory bulb, thyroid, duodenum, pancreas, liver, submaxillary gland.

Its subcellular location is the secreted. It is found in the extracellular space. It localises to the cell membrane. In terms of biological role, growth factor that mediates its effects via EGFR, ERBB2 and ERBB4. Required for normal cardiac valve formation and normal heart function. Promotes smooth muscle cell proliferation. May be involved in macrophage-mediated cellular proliferation. It is mitogenic for fibroblasts, but not endothelial cells. It is able to bind EGF receptor/EGFR with higher affinity than EGF itself and is a far more potent mitogen for smooth muscle cells than EGF. Also acts as a diphtheria toxin receptor. The sequence is that of Proheparin-binding EGF-like growth factor (HBEGF) from Sus scrofa (Pig).